Reading from the N-terminus, the 372-residue chain is Cytoplasmic tRNA 2-thiolation protein 1 (372 aa).

Residues 335 to 372 are disordered; sequence GKKEDGGCGSGGGGCGCAGAADETENEETRKRLKDLQF. A compositionally biased stretch (gly residues) spans 341–351; it reads GCGSGGGGCGC. The segment covering 361–372 has biased composition (basic and acidic residues); the sequence is EETRKRLKDLQF.

The protein belongs to the TtcA family. CTU1/NCS6/ATPBD3 subfamily.

The protein resides in the cytoplasm. Its pathway is tRNA modification; 5-methoxycarbonylmethyl-2-thiouridine-tRNA biosynthesis. Plays a central role in 2-thiolation of mcm(5)S(2)U at tRNA wobble positions of tRNA(Lys), tRNA(Glu) and tRNA(Gln). Directly binds tRNAs and probably acts by catalyzing adenylation of tRNAs, an intermediate required for 2-thiolation. It is unclear whether it acts as a sulfurtransferase that transfers sulfur from thiocarboxylated URM1 onto the uridine of tRNAs at wobble position. The chain is Cytoplasmic tRNA 2-thiolation protein 1 from Caenorhabditis briggsae.